A 636-amino-acid chain; its full sequence is Alpha-L-iduronidase (636 aa).

Positions 1–16 (MLSLLLVLTTLARIHA) are cleaved as a signal peptide. Residues proline 39, isoleucine 43, and histidine 45 each contribute to the alpha-D-mannopyranose site. The alpha-L-iduronate site is built by histidine 78, asparagine 169, and glutamate 170. Glutamate 170 functions as the Proton donor in the catalytic mechanism. N-linked (GlcNAc...) asparagine glycosylation is present at asparagine 180. Residue lysine 257 participates in alpha-L-iduronate binding. Asparagine 268 is a glycosylation site (N-linked (GlcNAc...) asparagine). Positions 293 and 299 each coordinate alpha-L-iduronate. The active-site Nucleophile is glutamate 293. Position 300 (tryptophan 300) interacts with alpha-D-mannopyranose. 2 residues coordinate alpha-L-iduronate: aspartate 342 and arginine 356. 4 N-linked (GlcNAc...) asparagine glycosylation sites follow: asparagine 365, asparagine 448, asparagine 453, and asparagine 483. An intrachain disulfide couples cysteine 529 to cysteine 565. Asparagine 622 carries N-linked (GlcNAc...) asparagine glycosylation.

Belongs to the glycosyl hydrolase 39 family.

Its subcellular location is the lysosome. The catalysed reaction is Hydrolysis of unsulfated alpha-L-iduronosidic linkages in dermatan sulfate.. In terms of biological role, essential lysosomal hydrolase responsible for the degradation of glycosaminoglycans (GAG) such as heparan sulfate. Required for lysosome function and autophagy. Consequently, has an essential role in the development, maintenance and function of various cells, tissues, and organs, including the muscles and the central nervous system (CNS). This Drosophila melanogaster (Fruit fly) protein is Alpha-L-iduronidase.